Consider the following 104-residue polypeptide: Astakine (104 aa).

A signal peptide spans 1 to 22 (MKMRGVSVGVLVVAMMSGLAMA). 5 disulfide bridges follow: cysteine 25/cysteine 38, cysteine 32/cysteine 50, cysteine 37/cysteine 76, cysteine 60/cysteine 84, and cysteine 78/cysteine 91.

It belongs to the AVIT (prokineticin) family.

It localises to the secreted. Cytokine directly involved in hematopoiesis. The chain is Astakine from Pacifastacus leniusculus (Signal crayfish).